We begin with the raw amino-acid sequence, 62 residues long: MKYFSVLVVLTLILAIVDQSDAFINLLDKVEDALHTGAQAGFKLIRPVERGATPKKSEKPEK.

Positions 1–22 (MKYFSVLVVLTLILAIVDQSDA) are cleaved as a signal peptide.

Belongs to the andropin family. As to expression, ejaculatory duct of adult males.

Its subcellular location is the secreted. In terms of biological role, male-specific peptide with moderate activity against Gram-positive bacteria. In Drosophila teissieri (Fruit fly), this protein is Andropin (Anp).